Reading from the N-terminus, the 266-residue chain is Large ribosomal subunit protein eL8 (266 aa).

Over residues 1-11 (MPKGKKAKGKK) the composition is skewed to basic residues. A disordered region spans residues 1 to 21 (MPKGKKAKGKKVAPAPSVAKK).

The protein belongs to the eukaryotic ribosomal protein eL8 family. Component of the large ribosomal subunit.

Its subcellular location is the cytoplasm. Its function is as follows. Component of the large ribosomal subunit. The ribosome is a large ribonucleoprotein complex responsible for the synthesis of proteins in the cell. The protein is Large ribosomal subunit protein eL8 (rpl7a) of Ictalurus punctatus (Channel catfish).